We begin with the raw amino-acid sequence, 1119 residues long: MDPCGNPAVPGGDCPQTRGPGLQGSSGQEGPLQGICVDSSHSEHEDRNRMSEELIMVVQEMKKYFPAERHTKPSTLDALNYALRCVHSVQANSEFFQSLSPRGARQAEATVYNLEELTSLASEHTSKNTDTFVAVFSFLSGRLVHISEQAAWILNSKKGFLKSLHFVDLLAPRDVRVFYAHTAPTQLPFWNTWTQRASQYECAPVKPFFCRICGGGDREQKRHYSPFRILPYLVHVHSPAQPEPEPCCLTLVEKIHSGYEAPRIPVDKRVFTTTHTPGCVFLEVDERAVPLLGFLPQDLIGTSILTYLHPEDRPLMVAVHQKVLKYVGHPPFEHSPIRFCTQNGDYVILDSSWSSFVNPWSRKVSFIIGRHKVRTSPLNEDVFATRIKKATSHDEDITELQEQIHRLLLQPVHASASSGYGSLGSSGSQEQHISVTSSSESSGHCVEEAQQEQMTLQQVYASVNKIKNVGQQLYIESMARSSVKPVMETCTEPQGSDEQKDFSSSQTLKNKSTDTGSGGDLRPEQHSSSYQQMNCIDSVIRYLTSYSFPALKRKCISCTNTSSSSEEAKPNPEADGSLRDTEQLLDIPEQETTTPSADAEGGVARTLSTAALSMASGVSQCSCSSTTDHVPPLQSESVAGACEPWALRTKAHVTAEGFKPVGLTAAVLSAHTQKEEQNYVDRFREKILTSPYGCYLQQEGRNHAKYACVVGAGATPKHSRCAGSERRKHKRKKLPTPVDSSSSSAHLCPHVRGLLPDVQHWSASVTSPCATGLALPSALVVPNQTPYLLSSFPLQDMAPHGVGDSAPWGAAAECPPLSAGPHPVSTFPSAYMGTFMTVLLHNSPLFPLWPASFSPYPFLGATGPSQMAPLVPAMAPDLEPTPSDHGPRRVEENWETHSEEEHPFISSRSSSPLQLNLLQEEMPAPSEYADALRRGACPDAKQLCVTGNSGSRSPPCATGELATASVQQESPSAAASGSSASSVHGSGSDYTSEVSENGQRSQDTHRDRAFSGAAEESIWRMIERTPQCVLMTYQVPERGRDTVLREDLEKLHSMERQRPQFSSAQKEELAKVRSWIHSHPAPEERQLQRAMSPVKTEVQLVTLQRPVNSVQQKTPVEQL.

The interval 1–48 is disordered; sequence MDPCGNPAVPGGDCPQTRGPGLQGSSGQEGPLQGICVDSSHSEHEDRN. Residues 54–63 carry the Nuclear export signal 1 motif; the sequence is LIMVVQEMKK. 2 consecutive PAS domains span residues 120–187 and 259–325; these read LASE…PTQL and YEAP…KVLK. The 44-residue stretch at 334–377 folds into the PAC domain; it reads HSPIRFCTQNGDYVILDSSWSSFVNPWSRKVSFIIGRHKVRTSP. The short motif at 400-409 is the Nuclear export signal 3 element; that stretch reads LQEQIHRLLL. The span at 419-428 shows a compositional bias: low complexity; sequence GYGSLGSSGS. 4 disordered regions span residues 419-449, 483-530, 718-744, and 878-910; these read GYGS…VEEA, VKPV…SSSY, HSRC…SSSS, and LEPT…SRSS. Polar residues-rich tracts occupy residues 429–442 and 491–515; these read QEQH…SESS and TEPQ…STDT. Residues 551–750 are CSNK1E binding domain; that stretch reads LKRKCISCTN…SSSSAHLCPH (200 aa). The Nuclear localization signal signature appears at 720 to 739; it reads RCAGSERRKHKRKKLPTPVD. A compositionally biased stretch (basic and acidic residues) spans 885–903; the sequence is HGPRRVEENWETHSEEEHP. A Phosphoserine modification is found at Ser907. A Nuclear export signal 2 motif is present at residues 913-920; that stretch reads LQLNLLQE. The interval 947–1011 is disordered; sequence GNSGSRSPPC…QDTHRDRAFS (65 aa). A compositionally biased stretch (low complexity) spans 970 to 988; that stretch reads SPSAAASGSSASSVHGSGS. The segment covering 989–1001 has biased composition (polar residues); that stretch reads DYTSEVSENGQRS. The segment at 1037-1119 is CRY binding domain; that stretch reads ERGRDTVLRE…VQQKTPVEQL (83 aa).

In terms of assembly, homodimer. Component of the circadian core oscillator, which includes the CRY proteins, CLOCK or NPAS2, BMAL1 or BMAL2, CSNK1D and/or CSNK1E, TIMELESS and the PER proteins. Interacts directly with PER1, PER2, CRY1, CRY2, and TIMELESS; interaction with CRY1 and CRY2 is weak and not rhythmic. Interacts with FBXW11 and BTRC. In terms of processing, phosphorylation by CSNK1E is weak and appears to require association with PER1 and translocation to the nucleus. Post-translationally, ubiquitinated.

The protein resides in the cytoplasm. Its subcellular location is the nucleus. Its function is as follows. Originally described as a core component of the circadian clock. The circadian clock, an internal time-keeping system, regulates various physiological processes through the generation of approximately 24 hour circadian rhythms in gene expression, which are translated into rhythms in metabolism and behavior. It is derived from the Latin roots 'circa' (about) and 'diem' (day) and acts as an important regulator of a wide array of physiological functions including metabolism, sleep, body temperature, blood pressure, endocrine, immune, cardiovascular, and renal function. Consists of two major components: the central clock, residing in the suprachiasmatic nucleus (SCN) of the brain, and the peripheral clocks that are present in nearly every tissue and organ system. Both the central and peripheral clocks can be reset by environmental cues, also known as Zeitgebers (German for 'timegivers'). The predominant Zeitgeber for the central clock is light, which is sensed by retina and signals directly to the SCN. The central clock entrains the peripheral clocks through neuronal and hormonal signals, body temperature and feeding-related cues, aligning all clocks with the external light/dark cycle. Circadian rhythms allow an organism to achieve temporal homeostasis with its environment at the molecular level by regulating gene expression to create a peak of protein expression once every 24 hours to control when a particular physiological process is most active with respect to the solar day. Transcription and translation of core clock components (CLOCK, NPAS2, BMAL1, BMAL2, PER1, PER2, PER3, CRY1 and CRY2) plays a critical role in rhythm generation, whereas delays imposed by post-translational modifications (PTMs) are important for determining the period (tau) of the rhythms (tau refers to the period of a rhythm and is the length, in time, of one complete cycle). A diurnal rhythm is synchronized with the day/night cycle, while the ultradian and infradian rhythms have a period shorter and longer than 24 hours, respectively. Disruptions in the circadian rhythms contribute to the pathology of cardiovascular diseases, cancer, metabolic syndromes and aging. A transcription/translation feedback loop (TTFL) forms the core of the molecular circadian clock mechanism. Transcription factors, CLOCK or NPAS2 and BMAL1 or BMAL2, form the positive limb of the feedback loop, act in the form of a heterodimer and activate the transcription of core clock genes and clock-controlled genes (involved in key metabolic processes), harboring E-box elements (5'-CACGTG-3') within their promoters. The core clock genes: PER1/2/3 and CRY1/2 which are transcriptional repressors form the negative limb of the feedback loop and interact with the CLOCK|NPAS2-BMAL1|BMAL2 heterodimer inhibiting its activity and thereby negatively regulating their own expression. This heterodimer also activates nuclear receptors NR1D1, NR1D2, RORA, RORB and RORG, which form a second feedback loop and which activate and repress BMAL1 transcription, respectively. Has a redundant role with the other PER proteins PER1 and PER2 and is not essential for the circadian rhythms maintenance. In contrast, plays an important role in sleep-wake timing and sleep homeostasis probably through the transcriptional regulation of sleep homeostasis-related genes, without influencing circadian parameters. Can bind heme. The sequence is that of Period circadian protein homolog 3 (Per3) from Rattus norvegicus (Rat).